We begin with the raw amino-acid sequence, 236 residues long: Serine/arginine-rich SC35-like splicing factor SCL28 (236 aa).

Disordered stretches follow at residues 1-53 (MARA…LIRN) and 124-219 (EENR…RVLT). A compositionally biased stretch (basic and acidic residues) spans 14–43 (RPRDRSPPRERKGYDDNRLRERPSSRDHES). Residues 47-125 (SGLLIRNLPL…REIAIVFAEE (79 aa)) enclose the RRM domain. Over residues 149 to 176 (TSHRSPRRRYRSHSRSRSPPRRESRHSK) the composition is skewed to basic residues. At Ser-184 the chain carries Phosphoserine. Basic and acidic residues predominate over residues 199–217 (RNEREYKSRNCRSPREERV).

It belongs to the splicing factor SR family. SCL subfamily. As to quaternary structure, component of the spliceosome. Interacts with RS2Z33, CYP59, CYP63 and CYP95.

The protein resides in the nucleus speckle. Involved in intron recognition and spliceosome assembly. Probably active at the 5' splice sites. The polypeptide is Serine/arginine-rich SC35-like splicing factor SCL28 (SCL28) (Arabidopsis thaliana (Mouse-ear cress)).